The sequence spans 738 residues: 1,4-alpha-glucan branching enzyme GlgB (738 aa).

The active-site Nucleophile is Asp417. Glu472 (proton donor) is an active-site residue.

The protein belongs to the glycosyl hydrolase 13 family. GlgB subfamily. As to quaternary structure, monomer.

The catalysed reaction is Transfers a segment of a (1-&gt;4)-alpha-D-glucan chain to a primary hydroxy group in a similar glucan chain.. Its pathway is glycan biosynthesis; glycogen biosynthesis. Catalyzes the formation of the alpha-1,6-glucosidic linkages in glycogen by scission of a 1,4-alpha-linked oligosaccharide from growing alpha-1,4-glucan chains and the subsequent attachment of the oligosaccharide to the alpha-1,6 position. The protein is 1,4-alpha-glucan branching enzyme GlgB of Burkholderia pseudomallei (strain 668).